A 256-amino-acid polypeptide reads, in one-letter code: Receptor expression-enhancing protein 3 (256 aa).

3 helical membrane passes run 1–21, 42–62, and 68–88; these read MVSWMISRSVVLVFGNLYPAY, WIVFALFTVVETVADLTIAWF, and IKIAFVIWLLSPYTRGASVIY. A disordered region spans residues 177–256; sequence IMDQPDGAEY…NATTYSNMES (80 aa). Positions 247–256 are enriched in polar residues; the sequence is NATTYSNMES.

The protein belongs to the DP1 family.

Its subcellular location is the endoplasmic reticulum membrane. In terms of biological role, microtubule-binding protein required to ensure proper cell division and nuclear envelope reassembly by sequestering the endoplasmic reticulum away from chromosomes during mitosis. Probably acts by clearing the endoplasmic reticulum membrane from metaphase chromosomes. The polypeptide is Receptor expression-enhancing protein 3 (reep3) (Danio rerio (Zebrafish)).